We begin with the raw amino-acid sequence, 406 residues long: Argininosuccinate synthase (406 aa).

ATP is bound by residues 11–19 and A38; that span reads AYSGGLDTS. The L-citrulline site is built by Y91 and S96. G121 contributes to the ATP binding site. 3 residues coordinate L-aspartate: T123, N127, and D128. An L-citrulline-binding site is contributed by N127. L-citrulline-binding residues include R131, S181, S190, E266, and Y278.

Belongs to the argininosuccinate synthase family. Type 1 subfamily. In terms of assembly, homotetramer.

It is found in the cytoplasm. It carries out the reaction L-citrulline + L-aspartate + ATP = 2-(N(omega)-L-arginino)succinate + AMP + diphosphate + H(+). It functions in the pathway amino-acid biosynthesis; L-arginine biosynthesis; L-arginine from L-ornithine and carbamoyl phosphate: step 2/3. The sequence is that of Argininosuccinate synthase from Campylobacter jejuni subsp. jejuni serotype O:23/36 (strain 81-176).